The chain runs to 600 residues: Aspartate--tRNA(Asp/Asn) ligase (600 aa).

L-aspartate is bound at residue Glu174. Positions 198 to 201 are aspartate; that stretch reads QLFK. Residue Arg220 participates in L-aspartate binding. ATP-binding positions include 220–222 and Gln229; that span reads RDE. His457 provides a ligand contact to L-aspartate. Residue Glu491 coordinates ATP. Arg498 is a binding site for L-aspartate. 543–546 contacts ATP; the sequence is GLDR.

This sequence belongs to the class-II aminoacyl-tRNA synthetase family. Type 1 subfamily. In terms of assembly, homodimer.

The protein resides in the cytoplasm. The catalysed reaction is tRNA(Asx) + L-aspartate + ATP = L-aspartyl-tRNA(Asx) + AMP + diphosphate. Aspartyl-tRNA synthetase with relaxed tRNA specificity since it is able to aspartylate not only its cognate tRNA(Asp) but also tRNA(Asn). Reaction proceeds in two steps: L-aspartate is first activated by ATP to form Asp-AMP and then transferred to the acceptor end of tRNA(Asp/Asn). This Burkholderia orbicola (strain MC0-3) protein is Aspartate--tRNA(Asp/Asn) ligase.